Consider the following 352-residue polypeptide: NADH-ubiquinone oxidoreductase chain 2 (352 aa).

Transmembrane regions (helical) follow at residues 4-24 (MISI…VSAE), 26-46 (WFVI…ILWF), 60-80 (FLVQ…QAWF), 96-116 (LCLS…FWLP), 124-144 (FIQG…LLFY), 150-170 (FSYF…WGGL), 178-198 (ILAF…AFSL), 205-225 (LFIY…LSIF), 241-261 (ITLV…TGFI), 274-294 (GFIF…FFYL), and 330-350 (LVSS…PLYI).

It belongs to the complex I subunit 2 family.

The protein resides in the mitochondrion inner membrane. The catalysed reaction is a ubiquinone + NADH + 5 H(+)(in) = a ubiquinol + NAD(+) + 4 H(+)(out). Functionally, core subunit of the mitochondrial membrane respiratory chain NADH dehydrogenase (Complex I) that is believed to belong to the minimal assembly required for catalysis. Complex I functions in the transfer of electrons from NADH to the respiratory chain. The immediate electron acceptor for the enzyme is believed to be ubiquinone. This chain is NADH-ubiquinone oxidoreductase chain 2 (ND2), found in Paracentrotus lividus (Common sea urchin).